A 95-amino-acid chain; its full sequence is Small ribosomal subunit protein bS6 (95 aa).

It belongs to the bacterial ribosomal protein bS6 family.

Its function is as follows. Binds together with bS18 to 16S ribosomal RNA. This Caldanaerobacter subterraneus subsp. tengcongensis (strain DSM 15242 / JCM 11007 / NBRC 100824 / MB4) (Thermoanaerobacter tengcongensis) protein is Small ribosomal subunit protein bS6.